The chain runs to 254 residues: tRNA (guanine-N(1)-)-methyltransferase (254 aa).

S-adenosyl-L-methionine is bound by residues Gly113 and 133 to 138 (IGDYVL).

The protein belongs to the RNA methyltransferase TrmD family. Homodimer.

It is found in the cytoplasm. It carries out the reaction guanosine(37) in tRNA + S-adenosyl-L-methionine = N(1)-methylguanosine(37) in tRNA + S-adenosyl-L-homocysteine + H(+). In terms of biological role, specifically methylates guanosine-37 in various tRNAs. This chain is tRNA (guanine-N(1)-)-methyltransferase, found in Edwardsiella ictaluri (strain 93-146).